The sequence spans 93 residues: Cobalt transport protein CbiN (93 aa).

2 helical membrane-spanning segments follow: residues 5–25 (LMLL…NHGG) and 63–83 (LLFT…LGYC).

The protein belongs to the CbiN family. Forms an energy-coupling factor (ECF) transporter complex composed of an ATP-binding protein (A component, CbiO), a transmembrane protein (T component, CbiQ) and 2 possible substrate-capture proteins (S components, CbiM and CbiN) of unknown stoichimetry.

Its subcellular location is the cell inner membrane. It functions in the pathway cofactor biosynthesis; adenosylcobalamin biosynthesis. Part of the energy-coupling factor (ECF) transporter complex CbiMNOQ involved in cobalt import. This is Cobalt transport protein CbiN from Salmonella agona (strain SL483).